A 123-amino-acid polypeptide reads, in one-letter code: Probable histone H2B 4 (123 aa).

The segment at 1–30 is disordered; the sequence is MPPKPSAKGAKKAAKTVVAKPKDGKKRRHA. Ser110 is a glycosylation site (O-linked (GlcNAc) serine). Lys118 is covalently cross-linked (Glycyl lysine isopeptide (Lys-Gly) (interchain with G-Cter in ubiquitin)).

The protein belongs to the histone H2B family. The nucleosome is a histone octamer containing two molecules each of H2A, H2B, H3 and H4 assembled in one H3-H4 heterotetramer and two H2A-H2B heterodimers. The octamer wraps approximately 147 bp of DNA. In terms of processing, monoubiquitination of Lys-118 gives a specific tag for epigenetic transcriptional activation and is also prerequisite for histone H3 'Lys-4' and 'Lys-79' methylation. Post-translationally, glcNAcylation at Ser-110 promotes monoubiquitination of Lys-118. It fluctuates in response to extracellular glucose, and associates with transcribed genes.

Its subcellular location is the nucleus. It is found in the chromosome. Core component of nucleosome. Nucleosomes wrap and compact DNA into chromatin, limiting DNA accessibility to the cellular machineries which require DNA as a template. Histones thereby play a central role in transcription regulation, DNA repair, DNA replication and chromosomal stability. DNA accessibility is regulated via a complex set of post-translational modifications of histones, also called histone code, and nucleosome remodeling. In Caenorhabditis elegans, this protein is Probable histone H2B 4 (his-48).